The sequence spans 149 residues: Arginine repressor (149 aa).

This sequence belongs to the ArgR family.

It localises to the cytoplasm. Its pathway is amino-acid biosynthesis; L-arginine biosynthesis [regulation]. Regulates arginine biosynthesis genes. This Bacillus cereus (strain ATCC 10987 / NRS 248) protein is Arginine repressor.